The chain runs to 57 residues: Putative antitoxin VapB4 (57 aa).

Possibly the antitoxin component of a type II toxin-antitoxin (TA) system. Its cognate toxin is VapC4 (Potential). The protein is Putative antitoxin VapB4 (vapB4) of Methanocaldococcus jannaschii (strain ATCC 43067 / DSM 2661 / JAL-1 / JCM 10045 / NBRC 100440) (Methanococcus jannaschii).